The sequence spans 142 residues: Small ribosomal subunit protein uS12z (142 aa).

Hydroxyproline is present on P61.

This sequence belongs to the universal ribosomal protein uS12 family.

The chain is Small ribosomal subunit protein uS12z (RPS23A) from Arabidopsis thaliana (Mouse-ear cress).